The following is a 179-amino-acid chain: MAKLHDYYKDEVVKKLMTEFNYNSVMQVPRVEKITLNMGVGEAIADKKLLDNAAADLAAISGQKPLITKARKSVAGFKIRQGYPIGCKVTLRGERMWEFFERLITIAVPRIRDFRGLSAKSFDGRGNYSMGVREQIIFPEIDYDKVDRVRGLDITITTTAKSDEEGRALLAAFDFPFRK.

The residue at position 3 (Lys-3) is an N6-acetyllysine.

Belongs to the universal ribosomal protein uL5 family. In terms of assembly, part of the 50S ribosomal subunit; part of the 5S rRNA/L5/L18/L25 subcomplex. Contacts the 5S rRNA and the P site tRNA. Forms a bridge to the 30S subunit in the 70S ribosome.

Its function is as follows. This is one of the proteins that bind and probably mediate the attachment of the 5S RNA into the large ribosomal subunit, where it forms part of the central protuberance. In the 70S ribosome it contacts protein S13 of the 30S subunit (bridge B1b), connecting the 2 subunits; this bridge is implicated in subunit movement. Contacts the P site tRNA; the 5S rRNA and some of its associated proteins might help stabilize positioning of ribosome-bound tRNAs. In Escherichia coli O45:K1 (strain S88 / ExPEC), this protein is Large ribosomal subunit protein uL5.